Consider the following 645-residue polypeptide: MAFWTVPYRAEAVDTNRDPSMYWEDINSASTDDAHNDFFGQFVDFDADGTVTATTDNDFNTVPASMPGVPESMLLMGDRTVATLESAVSSCVSSADEFDFLSSSSRIGPTASAASHEIDPKDLTLSADELAHPSQQQFDYLGRGSMSEADLSRLESISLHSPQRPQNTTSSDTPSPKPPNTDARKPKKFVEALSSTIRKATNLRRNRKAAAVPRQVSPPQEHLQPLKIPKQRRGRGRAVTQGNLPVSPPLQQQEQATPHFIHGQCDDPFNDTALLPPGGVNLQYYGQVAPDTPVESPGVKNEPNQSHFQVDMAWQHHHHPHHHHQQQQHPPPPPHPHPHPHHHQQQQQQHQHQHQHHHQQQQHHQQQQQQQHQMHWTGTGGEYITSQEAGWWTPNMMSQGPNDFSHHQRSASVHVMGHGQHTGMPYDYGAIADTSTGGLMIHMPQPRGSQSSVVNDLTVNAQTFLPPPPPIPQAIGQKMPGSERSHRPPKAKSSGARHLSCSPVRKQRGPSSSPTPADQSAVPRSRHSSGASVSSLRSSSGRLPASMPGTPCSVRKRRSRDISGSNSATSLGGSDGASGIGFVNFTPNDGSVLMTGVAPSGSSKTKARREKEAQDRRRRLSEAAIKAVAAAGGDVDKLIEQGFAF.

Disordered regions lie at residues S158–K187, T201–P249, Y284–W376, A461–S578, and G596–R618. Over residues T240–P249 the composition is skewed to polar residues. 2 stretches are compositionally biased toward basic residues: residues Q315–Q326 and Q351–Q361. A compositionally biased stretch (low complexity) spans Q362–Q373. The span at G509–D518 shows a compositional bias: polar residues. Residues S528–S546 are compositionally biased toward low complexity. Residues I562–G572 show a composition bias toward polar residues.

This sequence belongs to the wetA family.

BrlA, abaA and wetA are pivotal regulators of conidiophore development and conidium maturation. They act individually and together to regulate their own expression and that of numerous other sporulation-specific genes. BrlA, abaA and wetA act together to positively regulate the expression of the Pks1 gene cluster that mediates the biosynthesis of an anthraquinone derivative pigment that contributes to conidial pigmentation that provides protection from UV radiation, heat and cold stress. The chain is Developmental regulatory protein wetA from Metarhizium robertsii (strain ARSEF 23 / ATCC MYA-3075) (Metarhizium anisopliae (strain ARSEF 23)).